Here is a 288-residue protein sequence, read N- to C-terminus: L-threonine kinase (288 aa).

80–90 is an ATP binding site; that stretch reads PIAKGMASSTA.

The protein belongs to the GHMP kinase family. PduX subfamily.

It is found in the cytoplasm. The enzyme catalyses L-threonine + ATP = O-phospho-L-threonine + ADP + H(+). Its pathway is cofactor biosynthesis; adenosylcobalamin biosynthesis. It functions in the pathway polyol metabolism; 1,2-propanediol degradation. In terms of biological role, L-threonine kinase that catalyzes the conversion of L-threonine to L-threonine-O-3-phosphate. Involved in the de novo synthesis of adenosylcobalamin (coenzyme B12) and the assimilation of cobyric acid. Expression of a cosmid containing the full 21-gene pdu operon in E.coli allows E.coli to grow on 1,2-propanediol (1,2-PD) with the appearance of bacterial microcompartments (BMC) in its cytoplasm. Its function is as follows. The 1,2-PD-specific bacterial microcompartment (BMC) concentrates low levels of 1,2-PD catabolic enzymes, concentrates volatile reaction intermediates thus enhancing pathway flux and keeps the level of toxic, mutagenic propionaldehyde low. This gene probably benefits from its induction via the Pdu promoter, rather than a physical interaction with the BMC. The polypeptide is L-threonine kinase (Citrobacter freundii).